Here is a 168-residue protein sequence, read N- to C-terminus: Ribosome maturation factor RimM (168 aa).

The PRC barrel domain occupies 96 to 168; that stretch reads EDEYFITDLI…VMIVRLLEGL (73 aa).

Belongs to the RimM family. In terms of assembly, binds ribosomal protein uS19.

The protein resides in the cytoplasm. In terms of biological role, an accessory protein needed during the final step in the assembly of 30S ribosomal subunit, possibly for assembly of the head region. Essential for efficient processing of 16S rRNA. May be needed both before and after RbfA during the maturation of 16S rRNA. It has affinity for free ribosomal 30S subunits but not for 70S ribosomes. This chain is Ribosome maturation factor RimM, found in Caldanaerobacter subterraneus subsp. tengcongensis (strain DSM 15242 / JCM 11007 / NBRC 100824 / MB4) (Thermoanaerobacter tengcongensis).